A 204-amino-acid chain; its full sequence is Ribosomal RNA small subunit methyltransferase G (204 aa).

Residues glycine 74, leucine 79, 125–126 (AY), and arginine 138 each bind S-adenosyl-L-methionine.

The protein belongs to the methyltransferase superfamily. RNA methyltransferase RsmG family.

The protein localises to the cytoplasm. In terms of biological role, specifically methylates the N7 position of a guanine in 16S rRNA. The polypeptide is Ribosomal RNA small subunit methyltransferase G (Brachyspira hyodysenteriae (strain ATCC 49526 / WA1)).